Reading from the N-terminus, the 531-residue chain is Developmental and secondary metabolism regulator VE1 (531 aa).

The 195-residue stretch at 26-220 (NRSLWYQMTV…ADQGCPVRIR (195 aa)) folds into the Velvet domain. The Nuclear localization signal motif lies at 40–45 (ERARAC). 2 disordered regions span residues 206–435 (LSKT…SQTS) and 447–517 (PVSP…SRAD). Positions 244–253 (FERREEDFGR) are enriched in basic and acidic residues. The span at 295–306 (YPPPPPPPPSYE) shows a compositional bias: pro residues. The span at 348 to 357 (YAPTSQSPYS) shows a compositional bias: polar residues. The segment covering 381–390 (LKHELYDRRQ) has biased composition (basic and acidic residues). Residues 391–405 (STSTYVPPSPSVYST) are compositionally biased toward low complexity. A compositionally biased stretch (pro residues) spans 416–427 (SYPPTPVAAPRP). The PEST stretch occupies residues 430-461 (MHSQTSLPALKIDQLVSPVSPLPPIEPQTGPA). Over residues 479-491 (FAQSTRPLHNGQR) the composition is skewed to polar residues.

This sequence belongs to the velvet family. VeA subfamily. In terms of assembly, component of the heterotrimeric velvet complex composed of LAE1, VE1 and VELB; VE1 acting as a bridging protein between LAE1 and VELB. Interacts with VELB and VELC.

It is found in the nucleus. The protein localises to the cytoplasm. Functionally, component of the velvet transcription factor complex that controls sexual/asexual developmental ratio in response to light, promoting sexual development in the darkness while stimulating asexual sporulation under illumination. The velvet complex hat acts as a global regulator for secondary metabolite gene expression. Controls the expression of the cycotoxins fumonisins and fusarins gene cluster. Involved in cell wall integrity, cell surface hydrophobicity, hyphal polarity and conidiation pattern. Required for pathogenicity against maize seedlings. Involved in oxidative stress resistance by positively regulating the transcription of the catalase-encoding gene CAT2. In Gibberella moniliformis (strain M3125 / FGSC 7600) (Maize ear and stalk rot fungus), this protein is Developmental and secondary metabolism regulator VE1.